A 269-amino-acid polypeptide reads, in one-letter code: Shikimate dehydrogenase (NADP(+)) (269 aa).

Shikimate-binding positions include 14 to 16 and T61; that span reads SKS. The active-site Proton acceptor is the K65. Residue E77 coordinates NADP(+). Shikimate is bound by residues N86 and D102. NADP(+)-binding positions include 126–130, 149–154, and M213; these read GAGGA and NRTLTK. Y215 serves as a coordination point for shikimate. Residue G238 participates in NADP(+) binding.

This sequence belongs to the shikimate dehydrogenase family. Homodimer.

It catalyses the reaction shikimate + NADP(+) = 3-dehydroshikimate + NADPH + H(+). The protein operates within metabolic intermediate biosynthesis; chorismate biosynthesis; chorismate from D-erythrose 4-phosphate and phosphoenolpyruvate: step 4/7. In terms of biological role, involved in the biosynthesis of the chorismate, which leads to the biosynthesis of aromatic amino acids. Catalyzes the reversible NADPH linked reduction of 3-dehydroshikimate (DHSA) to yield shikimate (SA). This chain is Shikimate dehydrogenase (NADP(+)), found in Actinobacillus succinogenes (strain ATCC 55618 / DSM 22257 / CCUG 43843 / 130Z).